A 472-amino-acid polypeptide reads, in one-letter code: GTPase HflX (472 aa).

Residues Met-1–Ala-21 are disordered. Residues Pro-230 to Ser-396 enclose the Hflx-type G domain. Residues Gly-236–Ser-243, Phe-261–Asp-265, Asp-283–Gly-286, Asn-349–Asp-352, and Ser-374–Lys-376 each bind GTP. Ser-243 and Thr-263 together coordinate Mg(2+).

Belongs to the TRAFAC class OBG-HflX-like GTPase superfamily. HflX GTPase family. As to quaternary structure, monomer. Associates with the 50S ribosomal subunit. Requires Mg(2+) as cofactor.

It is found in the cytoplasm. Functionally, GTPase that associates with the 50S ribosomal subunit and may have a role during protein synthesis or ribosome biogenesis. Specific for GTP. In Chlamydia pneumoniae (Chlamydophila pneumoniae), this protein is GTPase HflX.